We begin with the raw amino-acid sequence, 416 residues long: Multifunctional CCA protein (416 aa).

2 residues coordinate ATP: Gly-8 and Arg-11. Gly-8 and Arg-11 together coordinate CTP. Asp-21 and Asp-23 together coordinate Mg(2+). ATP is bound by residues Arg-91, Arg-138, and Arg-141. Residues Arg-91, Arg-138, and Arg-141 each contribute to the CTP site. Positions 229–331 (TGLHQELVSD…YELLQRCDAF (103 aa)) constitute an HD domain.

Belongs to the tRNA nucleotidyltransferase/poly(A) polymerase family. Bacterial CCA-adding enzyme type 1 subfamily. As to quaternary structure, monomer. Can also form homodimers and oligomers. Requires Mg(2+) as cofactor. Ni(2+) is required as a cofactor.

It carries out the reaction a tRNA precursor + 2 CTP + ATP = a tRNA with a 3' CCA end + 3 diphosphate. It catalyses the reaction a tRNA with a 3' CCA end + 2 CTP + ATP = a tRNA with a 3' CCACCA end + 3 diphosphate. Functionally, catalyzes the addition and repair of the essential 3'-terminal CCA sequence in tRNAs without using a nucleic acid template. Adds these three nucleotides in the order of C, C, and A to the tRNA nucleotide-73, using CTP and ATP as substrates and producing inorganic pyrophosphate. tRNA 3'-terminal CCA addition is required both for tRNA processing and repair. Also involved in tRNA surveillance by mediating tandem CCA addition to generate a CCACCA at the 3' terminus of unstable tRNAs. While stable tRNAs receive only 3'-terminal CCA, unstable tRNAs are marked with CCACCA and rapidly degraded. The protein is Multifunctional CCA protein of Xylella fastidiosa (strain 9a5c).